The following is a 277-amino-acid chain: Shikimate dehydrogenase (NADP(+)) (277 aa).

Residues Ser-15–Ser-17 and Thr-62 each bind shikimate. The active-site Proton acceptor is the Lys-66. Residues Asn-87 and Asp-102 each coordinate shikimate. Residues Gly-127–Ala-131, Asn-151–Lys-156, and Ile-219 contribute to the NADP(+) site. Tyr-221 contacts shikimate. Gly-242 is an NADP(+) binding site.

This sequence belongs to the shikimate dehydrogenase family. In terms of assembly, homodimer.

The catalysed reaction is shikimate + NADP(+) = 3-dehydroshikimate + NADPH + H(+). It functions in the pathway metabolic intermediate biosynthesis; chorismate biosynthesis; chorismate from D-erythrose 4-phosphate and phosphoenolpyruvate: step 4/7. In terms of biological role, involved in the biosynthesis of the chorismate, which leads to the biosynthesis of aromatic amino acids. Catalyzes the reversible NADPH linked reduction of 3-dehydroshikimate (DHSA) to yield shikimate (SA). This Bacillus mycoides (strain KBAB4) (Bacillus weihenstephanensis) protein is Shikimate dehydrogenase (NADP(+)).